A 931-amino-acid chain; its full sequence is Elicitor of plant defense protein 1 (931 aa).

A disordered region spans residues 13–32; sequence NYNSVIPPPEPLNTDPDMHP. The uDENN domain occupies 19-277; the sequence is PPPEPLNTDP…NLCTEAFNPL (259 aa). A cDENN domain is found at 301–433; the sequence is EIPGSRSIDL…ARRKLMSLLQ (133 aa). The region spanning 435–799 is the dDENN domain; it reads AAPHKLRYGV…DREMQPANNA (365 aa). 2 disordered regions span residues 478–552 and 566–586; these read LGKW…SRSD and SGHF…DKHP. A compositionally biased stretch (polar residues) spans 521–537; sequence TSKSGKTSPQSSVSPVS. The segment covering 566–575 has biased composition (basic and acidic residues); that stretch reads SGHFGEEKMR. Residues 666-714 form a Phorbol-ester/DAG-type zinc finger; it reads GHCFNWIPKDNTSICNICNDHAEGDGIYKCTGCKIFSHGRCLGHASLVC.

The protein belongs to the EPD1 elicitor family.

The protein resides in the secreted. It localises to the host cell. Acts as an elicitor that triggers cell death and defense responses in the host plants. The polypeptide is Elicitor of plant defense protein 1 (Fusarium odoratissimum (strain NRRL 54006)).